We begin with the raw amino-acid sequence, 404 residues long: Probable tRNA sulfurtransferase (404 aa).

Positions 60–165 (HEVAESLKEI…DEAAYISYEN (106 aa)) constitute a THUMP domain. ATP-binding positions include 183-184 (ML), 208-209 (HF), Arg265, Gly287, and Gln296.

It belongs to the ThiI family.

The protein localises to the cytoplasm. The catalysed reaction is [ThiI sulfur-carrier protein]-S-sulfanyl-L-cysteine + a uridine in tRNA + 2 reduced [2Fe-2S]-[ferredoxin] + ATP + H(+) = [ThiI sulfur-carrier protein]-L-cysteine + a 4-thiouridine in tRNA + 2 oxidized [2Fe-2S]-[ferredoxin] + AMP + diphosphate. It catalyses the reaction [ThiS sulfur-carrier protein]-C-terminal Gly-Gly-AMP + S-sulfanyl-L-cysteinyl-[cysteine desulfurase] + AH2 = [ThiS sulfur-carrier protein]-C-terminal-Gly-aminoethanethioate + L-cysteinyl-[cysteine desulfurase] + A + AMP + 2 H(+). It functions in the pathway cofactor biosynthesis; thiamine diphosphate biosynthesis. Functionally, catalyzes the ATP-dependent transfer of a sulfur to tRNA to produce 4-thiouridine in position 8 of tRNAs, which functions as a near-UV photosensor. Also catalyzes the transfer of sulfur to the sulfur carrier protein ThiS, forming ThiS-thiocarboxylate. This is a step in the synthesis of thiazole, in the thiamine biosynthesis pathway. The sulfur is donated as persulfide by IscS. In Streptococcus agalactiae serotype Ia (strain ATCC 27591 / A909 / CDC SS700), this protein is Probable tRNA sulfurtransferase.